The primary structure comprises 291 residues: Putative phosphatase MG263 (291 aa).

Aspartate 11 functions as the Nucleophile in the catalytic mechanism. A Mg(2+)-binding site is contributed by aspartate 11. Residue leucine 12 coordinates phosphate. Aspartate 13 contributes to the Mg(2+) binding site. Residues 60–61 (TG) and lysine 217 contribute to the phosphate site. Aspartate 241 contacts Mg(2+). Position 244 (asparagine 244) interacts with phosphate.

Belongs to the HAD-like hydrolase superfamily. Cof family. Mg(2+) is required as a cofactor.

In Mycoplasma genitalium (strain ATCC 33530 / DSM 19775 / NCTC 10195 / G37) (Mycoplasmoides genitalium), this protein is Putative phosphatase MG263.